The sequence spans 152 residues: Endoribonuclease YbeY (152 aa).

The Zn(2+) site is built by His-113, His-117, and His-123.

The protein belongs to the endoribonuclease YbeY family. The cofactor is Zn(2+).

It localises to the cytoplasm. In terms of biological role, single strand-specific metallo-endoribonuclease involved in late-stage 70S ribosome quality control and in maturation of the 3' terminus of the 16S rRNA. The protein is Endoribonuclease YbeY of Wolbachia pipientis subsp. Culex pipiens (strain wPip).